We begin with the raw amino-acid sequence, 258 residues long: tRNA pseudouridine synthase A (258 aa).

Aspartate 52 serves as the catalytic Nucleophile. A substrate-binding site is contributed by tyrosine 110.

The protein belongs to the tRNA pseudouridine synthase TruA family. In terms of assembly, homodimer.

The enzyme catalyses uridine(38/39/40) in tRNA = pseudouridine(38/39/40) in tRNA. Its function is as follows. Formation of pseudouridine at positions 38, 39 and 40 in the anticodon stem and loop of transfer RNAs. The polypeptide is tRNA pseudouridine synthase A (Francisella tularensis subsp. novicida (strain U112)).